Here is a 297-residue protein sequence, read N- to C-terminus: MSANKQKKLSTMEVDPNEDVSSSSEDDDDDEPHPDAYKGNEEVQIDFEGRAPVDPDAQGISQLLQRLFLRAHINCNQMADLIIAQNFIGSVICQCDDEGTESETEDDNMVEDGTIFGITSVLNLTAKKDQPSIAQLRTYILDRAKTHASPEVQQQLKEILDSEQRHVGFLINERFINIPAQISVPLLQSLQQEIEAAKAKKMKYDFGTLLLLVKFYRKESKKGKPGEDVYTNAEDELLSDRAKFSFEYSMASETDSGMSGDWLEGDAVMTPYRKLLVLEAKKLPQLIDDIQRFINGE.

The tract at residues 1–40 (MSANKQKKLSTMEVDPNEDVSSSSEDDDDDEPHPDAYKGN) is disordered.

Belongs to the BCP1 family.

The chain is Protein BCCIP homolog from Drosophila melanogaster (Fruit fly).